Reading from the N-terminus, the 342-residue chain is Serpentine receptor class gamma-69 (342 aa).

A run of 7 helical transmembrane segments spans residues 11–31 (MAGL…SVVV), 51–71 (SLLY…HFLI), 106–126 (PIAI…IVAA), 140–160 (LFVL…IPCK), 191–211 (IAAV…LIAL), 222–242 (AEIS…IYAF), and 269–289 (FAID…STTV).

Belongs to the nematode receptor-like protein srg family.

It localises to the membrane. The sequence is that of Serpentine receptor class gamma-69 (srg-69) from Caenorhabditis elegans.